Here is a 278-residue protein sequence, read N- to C-terminus: Bifunctional protein FolD (278 aa).

NADP(+) contacts are provided by residues 162 to 164 (GAG) and isoleucine 228.

Belongs to the tetrahydrofolate dehydrogenase/cyclohydrolase family. In terms of assembly, homodimer.

It catalyses the reaction (6R)-5,10-methylene-5,6,7,8-tetrahydrofolate + NADP(+) = (6R)-5,10-methenyltetrahydrofolate + NADPH. The enzyme catalyses (6R)-5,10-methenyltetrahydrofolate + H2O = (6R)-10-formyltetrahydrofolate + H(+). Its pathway is one-carbon metabolism; tetrahydrofolate interconversion. Its function is as follows. Catalyzes the oxidation of 5,10-methylenetetrahydrofolate to 5,10-methenyltetrahydrofolate and then the hydrolysis of 5,10-methenyltetrahydrofolate to 10-formyltetrahydrofolate. The protein is Bifunctional protein FolD of Hydrogenobaculum sp. (strain Y04AAS1).